Consider the following 219-residue polypeptide: Putative ankyrin repeat protein BB_0399 (219 aa).

ANK repeat units follow at residues 104–133 (YKIS…SLNQ), 137–166 (TGYS…DLSF), and 170–199 (NRKT…YIDD).

In Borreliella burgdorferi (strain ATCC 35210 / DSM 4680 / CIP 102532 / B31) (Borrelia burgdorferi), this protein is Putative ankyrin repeat protein BB_0399.